Here is a 97-residue protein sequence, read N- to C-terminus: Small ribosomal subunit protein bS20 (97 aa).

This sequence belongs to the bacterial ribosomal protein bS20 family.

Functionally, binds directly to 16S ribosomal RNA. This Gloeothece citriformis (strain PCC 7424) (Cyanothece sp. (strain PCC 7424)) protein is Small ribosomal subunit protein bS20.